Reading from the N-terminus, the 152-residue chain is Multiprotein-bridging factor 1 (152 aa).

Composition is skewed to polar residues over residues 1-11 and 22-32; these read MSSDWDTNTVI and PRQQVARTQGQ. The tract at residues 1–32 is disordered; the sequence is MSSDWDTNTVIGQRVRTGGSGPRQQVARTQGQ. The HTH cro/C1-type domain occupies 86-140; it reads IAKGRGDKGMTQKDLATRINEKPTVINDYEAGRAIPNQQILAKMERALGVKLRGK. The segment at residues 97–116 is a DNA-binding region (H-T-H motif); sequence QKDLATRINEKPTVINDYEA.

It belongs to the MBF1 family.

Transcriptional coactivator that stimulates GCN4-dependent transcriptional activity by bridging the DNA-binding region of GCN4 and TBP (SPT15), thereby recruiting TBP to GCN4-bound promoters. Involved in induction of the ribosome quality control (RQC) pathway; a pathway that degrades nascent peptide chains during problematic translation. Required to prevent stalled ribosomes from frameshifting. The chain is Multiprotein-bridging factor 1 (MBF1) from Eremothecium gossypii (strain ATCC 10895 / CBS 109.51 / FGSC 9923 / NRRL Y-1056) (Yeast).